A 136-amino-acid polypeptide reads, in one-letter code: Histone H2A (136 aa).

Over residues 1–11 (MTGGGKSGGKA) the composition is skewed to gly residues. The segment at 1 to 24 (MTGGGKSGGKASGSKNAQSRSSKA) is disordered. 2 positions are modified to N6-acetyllysine: K6 and K10. Q107 is modified (N5-methylglutamine). S133 carries the phosphoserine modification. Residues 133–134 (SQ) carry the [ST]-Q motif motif.

The protein belongs to the histone H2A family. The nucleosome is a histone octamer containing two molecules each of H2A, H2B, H3 and H4 assembled in one H3-H4 heterotetramer and two H2A-H2B heterodimers. The octamer wraps approximately 147 bp of DNA. In terms of processing, phosphorylated to form H2AS128ph (gamma-H2A) in response to DNA double-strand breaks (DSBs) generated by exogenous genotoxic agents and by stalled replication forks. Phosphorylation is dependent on the DNA damage checkpoint kinases MEC1/ATR and TEL1/ATM, spreads on either side of a detected DSB site and may mark the surrounding chromatin for recruitment of proteins required for DNA damage signaling and repair. Gamma-H2A is removed from the DNA prior to the strand invasion-primer extension step of the repair process and subsequently dephosphorylated. Dephosphorylation is necessary for efficient recovery from the DNA damage checkpoint. Acetylated by ESA1 to form H2AK4ac and H2AK7ac.

Its subcellular location is the nucleus. The protein resides in the chromosome. Functionally, core component of nucleosome which plays a central role in DNA double strand break (DSB) repair. Nucleosomes wrap and compact DNA into chromatin, limiting DNA accessibility to the cellular machineries which require DNA as a template. Histones thereby play a central role in transcription regulation, DNA repair, DNA replication and chromosomal stability. DNA accessibility is regulated via a complex set of post-translational modifications of histones, also called histone code, and nucleosome remodeling. The polypeptide is Histone H2A (HTA1) (Pyricularia oryzae (strain Y34) (Rice blast fungus)).